Here is a 263-residue protein sequence, read N- to C-terminus: MQGRTPLLETLRELECEIRLLTVYARECCGCYEILRRKLDRLSGLIGEDCSRAQWQADSDDPALQALGLRLRDAAVQALCELEKHLCQGVLHEPGEMGRYLGSLLESIRGELDSAGIDADARVLFVGSGALPTSALVLAREVGAHLCCLDIDEEALGCAREIARCQGLEARMQFSSLPPAELAFSRDATHFLIASLVQQKSAVLAQIRQVMRADAKVLLRHGSGIKGLFNYPVEPAELDGWRVCAERVSQPLYDTLILEKAGR.

It belongs to the methyltransferase superfamily. CntL family.

The catalysed reaction is L-histidine + S-adenosyl-L-methionine = (2S)-2-amino-4-{[(1S)-1-carboxy-2-(1H-imidazol-4-yl)ethyl]amino}butanoate + S-methyl-5'-thioadenosine + H(+). In terms of biological role, catalyzes the nucleophilic attack of one alpha-aminobutanoate moiety from SAM onto L-histidine to produce the intermediate (2S)-2-amino-4-{[(1S)-1-carboxy-2-(1H-imidazol-4-yl)ethyl]amino}butanoate. Functions in the biosynthesis of the metallophore pseudopaline, which is involved in the acquisition of nickel and zinc, and thus enables bacterial growth inside the host, where metal access is limited. Therefore, this enzyme probably contributes to Pseudomonas virulence. Appears to be specific for L-histidine as substrate. The chain is L-histidine 2-aminobutanoyltransferase from Pseudomonas aeruginosa (strain ATCC 15692 / DSM 22644 / CIP 104116 / JCM 14847 / LMG 12228 / 1C / PRS 101 / PAO1).